Here is a 135-residue protein sequence, read N- to C-terminus: MSYAELIEEQKEETRDIIAALLEDGSEPEALYTIEHHFSADTFAELEAAAVEAFKMGFEVLEAEELELAPEDGGGKVVCFDAVMESALNAELIDEQTEKLIALADKHDIDYDGWGTYFESDEDDEEDESEDKPEA.

Positions 114–135 (WGTYFESDEDDEEDESEDKPEA) are disordered. Residues 119–135 (ESDEDDEEDESEDKPEA) show a composition bias toward acidic residues.

The protein belongs to the RraB family. Interacts with the C-terminal region of Rne.

The protein localises to the cytoplasm. Functionally, globally modulates RNA abundance by binding to RNase E (Rne) and regulating its endonucleolytic activity. Can modulate Rne action in a substrate-dependent manner by altering the composition of the degradosome. The sequence is that of Regulator of ribonuclease activity B from Photobacterium profundum (strain SS9).